Reading from the N-terminus, the 155-residue chain is Large ribosomal subunit protein uL30 (155 aa).

The protein belongs to the universal ribosomal protein uL30 family. In terms of assembly, part of the 50S ribosomal subunit.

The polypeptide is Large ribosomal subunit protein uL30 (Cenarchaeum symbiosum (strain A)).